The sequence spans 161 residues: MRDITPDLCDKYESQVTLLNLPLQNFGQRSAFWGEIVTVRCYHDNSKVRDVLSQNGKGKVLVVDGHGSCHKALMGDQLAILAIKNDWEGVIIYGAVRDVVAMSEMDLGIKALGTSPFKTEKRGAGQVNVTLTMQNQIVEPGDYLYADWNGILMSETALDVA.

Substrate contacts are provided by residues 75–78 and R97; that span reads GDQL. D98 is a binding site for a divalent metal cation.

This sequence belongs to the class II aldolase/RraA-like family. As to quaternary structure, homotrimer. A divalent metal cation serves as cofactor.

It catalyses the reaction 4-hydroxy-4-methyl-2-oxoglutarate = 2 pyruvate. It carries out the reaction oxaloacetate + H(+) = pyruvate + CO2. In terms of biological role, catalyzes the aldol cleavage of 4-hydroxy-4-methyl-2-oxoglutarate (HMG) into 2 molecules of pyruvate. Also contains a secondary oxaloacetate (OAA) decarboxylase activity due to the common pyruvate enolate transition state formed following C-C bond cleavage in the retro-aldol and decarboxylation reactions. The sequence is that of Putative 4-hydroxy-4-methyl-2-oxoglutarate aldolase from Vibrio cholerae serotype O1 (strain ATCC 39315 / El Tor Inaba N16961).